Consider the following 236-residue polypeptide: Small ribosomal subunit protein uS3 (236 aa).

Residues 39-107 (IREILHKELK…DVVINIVEIR (69 aa)) enclose the KH type-2 domain. Positions 213–236 (MAQDKRMNEGGGESPSPRSRRDAA) are disordered.

It belongs to the universal ribosomal protein uS3 family. Part of the 30S ribosomal subunit. Forms a tight complex with proteins S10 and S14.

Its function is as follows. Binds the lower part of the 30S subunit head. Binds mRNA in the 70S ribosome, positioning it for translation. This chain is Small ribosomal subunit protein uS3, found in Bradyrhizobium sp. (strain ORS 278).